Consider the following 337-residue polypeptide: tRNA N6-adenosine threonylcarbamoyltransferase (337 aa).

Fe cation contacts are provided by histidine 111 and histidine 115. Substrate-binding positions include 134–138 (LVSGG), aspartate 167, glycine 180, and asparagine 272. Aspartate 300 is a Fe cation binding site.

This sequence belongs to the KAE1 / TsaD family. Fe(2+) is required as a cofactor.

It is found in the cytoplasm. It catalyses the reaction L-threonylcarbamoyladenylate + adenosine(37) in tRNA = N(6)-L-threonylcarbamoyladenosine(37) in tRNA + AMP + H(+). In terms of biological role, required for the formation of a threonylcarbamoyl group on adenosine at position 37 (t(6)A37) in tRNAs that read codons beginning with adenine. Is involved in the transfer of the threonylcarbamoyl moiety of threonylcarbamoyl-AMP (TC-AMP) to the N6 group of A37, together with TsaE and TsaB. TsaD likely plays a direct catalytic role in this reaction. The protein is tRNA N6-adenosine threonylcarbamoyltransferase of Aeromonas hydrophila subsp. hydrophila (strain ATCC 7966 / DSM 30187 / BCRC 13018 / CCUG 14551 / JCM 1027 / KCTC 2358 / NCIMB 9240 / NCTC 8049).